Reading from the N-terminus, the 667-residue chain is Long-chain fatty acid transport protein 3 (667 aa).

A helical transmembrane segment spans residues 3–23 (ALLLLLPLLLLLPLLLKLDVW). A disordered region spans residues 114-144 (TGGRRGSGRGSTEEGARVAPPAGDAAARGTT). Over residues 130-144 (RVAPPAGDAAARGTT) the composition is skewed to low complexity. ATP contacts are provided by residues 272–276 (TSGTT), His-315, Thr-412, Asp-512, Arg-527, and Lys-619.

It belongs to the ATP-dependent AMP-binding enzyme family. As to expression, expressed at high levels in adrenal gland, testis and ovary. Expressed at lower levels in adult brain. Found in adrenal cortical cells, spermatocytes and interstitial cells of the testis, theca cells of the ovary, cerebral cortical neurons, and cerebellar Purkinje cells (at protein level).

The protein resides in the mitochondrion membrane. It carries out the reaction a fatty acid(in) = a fatty acid(out). It catalyses the reaction a long-chain fatty acid + ATP + CoA = a long-chain fatty acyl-CoA + AMP + diphosphate. The enzyme catalyses (5Z,8Z,11Z,14Z)-eicosatetraenoate + ATP + CoA = (5Z,8Z,11Z,14Z)-eicosatetraenoyl-CoA + AMP + diphosphate. The catalysed reaction is hexadecanoate + ATP + CoA = hexadecanoyl-CoA + AMP + diphosphate. It carries out the reaction (9Z)-octadecenoate + ATP + CoA = (9Z)-octadecenoyl-CoA + AMP + diphosphate. It catalyses the reaction (9Z,12Z)-octadecadienoate + ATP + CoA = (9Z,12Z)-octadecadienoyl-CoA + AMP + diphosphate. The enzyme catalyses a very long-chain fatty acid + ATP + CoA = a very long-chain fatty acyl-CoA + AMP + diphosphate. The catalysed reaction is tetracosanoate + ATP + CoA = tetracosanoyl-CoA + AMP + diphosphate. Its function is as follows. Mainly functions as an acyl-CoA ligase catalyzing the ATP-dependent formation of fatty acyl-CoA using LCFA and very-long-chain fatty acids (VLCFA) as substrates. Can mediate the levels of long-chain fatty acids (LCFA) in the cell by facilitating their transport across membranes. In Mus musculus (Mouse), this protein is Long-chain fatty acid transport protein 3 (Slc27a3).